A 145-amino-acid polypeptide reads, in one-letter code: Large ribosomal subunit protein uL11 (145 aa).

This sequence belongs to the universal ribosomal protein uL11 family. Part of the ribosomal stalk of the 50S ribosomal subunit. Interacts with L10 and the large rRNA to form the base of the stalk. L10 forms an elongated spine to which L12 dimers bind in a sequential fashion forming a multimeric L10(L12)X complex. Post-translationally, one or more lysine residues are methylated.

Its function is as follows. Forms part of the ribosomal stalk which helps the ribosome interact with GTP-bound translation factors. The chain is Large ribosomal subunit protein uL11 from Rubrobacter xylanophilus (strain DSM 9941 / JCM 11954 / NBRC 16129 / PRD-1).